Here is a 193-residue protein sequence, read N- to C-terminus: dITP/XTP pyrophosphatase (193 aa).

Residue 7 to 12 (SENENK) coordinates substrate. Aspartate 65 (proton acceptor) is an active-site residue. Aspartate 65 is a binding site for Mg(2+). Substrate contacts are provided by residues serine 66, 144–147 (FGYD), lysine 167, and 172–173 (HR).

It belongs to the HAM1 NTPase family. Homodimer. The cofactor is Mg(2+).

It carries out the reaction XTP + H2O = XMP + diphosphate + H(+). It catalyses the reaction dITP + H2O = dIMP + diphosphate + H(+). The enzyme catalyses ITP + H2O = IMP + diphosphate + H(+). Pyrophosphatase that catalyzes the hydrolysis of nucleoside triphosphates to their monophosphate derivatives, with a high preference for the non-canonical purine nucleotides XTP (xanthosine triphosphate), dITP (deoxyinosine triphosphate) and ITP. Seems to function as a house-cleaning enzyme that removes non-canonical purine nucleotides from the nucleotide pool, thus preventing their incorporation into DNA/RNA and avoiding chromosomal lesions. This is dITP/XTP pyrophosphatase from Tropheryma whipplei (strain TW08/27) (Whipple's bacillus).